We begin with the raw amino-acid sequence, 94 residues long: Transcription factor PRE6 (94 aa).

Residues 1-20 form a disordered region; it reads MSSRRSSRSRQSGSSRISDD. The 55-residue stretch at 6–60 folds into the bHLH domain; the sequence is SSRSRQSGSSRISDDQISDLVSKLQHLIPELRRRRSDKVSASKVLQETCNYIRNL.

The protein belongs to the bHLH protein family. As to quaternary structure, interacts with HFR1.

The protein resides in the cytoplasm. Its subcellular location is the nucleus. In terms of biological role, atypical and probable non DNA-binding bHLH transcription factor that regulates light-mediated responses in day light conditions by binding and inhibiting the activity of the bHLH transcription factor HFR1, a critical regulator of light signaling and shade avoidance. Forms non-functional heterodimers with HFR1, causing liberation and activation of PIF4 from the transcriptionally inactive HFR1-PIF4 complex. This Arabidopsis thaliana (Mouse-ear cress) protein is Transcription factor PRE6 (PRE6).